Consider the following 312-residue polypeptide: Olfactory receptor 2C1 (312 aa).

At 1-24 (MEVDSNSSSGSFILMGVSDHPHLE) the chain is on the extracellular side. The N-linked (GlcNAc...) asparagine glycan is linked to Asn-6. A helical membrane pass occupies residues 25–48 (IIFFAVILASYLLTLVGNLTIILL). The Cytoplasmic segment spans residues 49-57 (SRLDARLHT). Residues 58–79 (PMYFFLSNLSSLDLAFTTSSVP) form a helical membrane-spanning segment. The Extracellular portion of the chain corresponds to 80–100 (QMLKNLWGPDKTISYGGCVTQ). A disulfide bond links Cys-97 and Cys-189. The chain crosses the membrane as a helical span at residues 101–120 (LYVFLWLGATECILLVVMAF). At 121-139 (DRYVAVCRPLHYMTVMNPR) the chain is on the cytoplasmic side. The helical transmembrane segment at 140–160 (LCWGLAAISWLGGLGNSVIQS) threads the bilayer. The Extracellular segment spans residues 161–200 (TFTLQLPFCGHRKVDNFLCEVPAMIKLACGDTSLNEAVLN). The helical transmembrane segment at 201–222 (GVCTFFTVVPVSVILVSYCFIA) threads the bilayer. The Cytoplasmic segment spans residues 223–236 (QAVMKIRSVEGRRK). Residues 237–261 (AFNTCVSHLVVVFLFYGSAIYGYLL) form a helical membrane-spanning segment. The Extracellular segment spans residues 262 to 272 (PAKSSNQSQGK). The helical transmembrane segment at 273–292 (FISLFYSVVTPMVNPLIYTL) threads the bilayer. The Cytoplasmic segment spans residues 293–312 (RNKEVKGALGRLLGKGRGAS).

The protein belongs to the G-protein coupled receptor 1 family. As to expression, olfactory epithelium. Present in various subcellular compartments of the olfactory sensory neurons, particularly in the axonal processes and neve terminals.

It localises to the cell membrane. Its function is as follows. Olfactory receptor that is activated by the binding of organosulfur odorants with thioether groups such as (methylthio)methanetiol (MTMT). Also binds odorants acetophenone and benzaldehyde. The activity of this receptor is mediated by G proteins which activate adenylyl cyclase. May be involved in the molecular processes underlying fasciculation and targeting of olfactory axons. This chain is Olfactory receptor 2C1, found in Mus musculus (Mouse).